A 417-amino-acid chain; its full sequence is MLEQMGKQAKDAAFILAQLTTAEKNRALSIIAEQLEQQAPLILAENAKDIELAKQNELSDALIDRLLLTQERLQGIANDVRHVISLADPVGKIIDGGTLDSGLKIERVRTPLGVIGTIYEARPNVTIDVASLCLKTGNAVILRGGKETQFSNKILIEVVQNALEQAGLPKFAVQAITDPNRELVMQLLKLDRYVDMIIPRGGSDLHELCKQHSTIPVIVGGVGVCHTFVEESADQNKAIFVIDNAKTQRPSTCNTLETLLVQHSIAEEFLPKLVSHLSAKNVKYHAKSTALNILKQAGANVCEVTEKELRKEWGSLDLNVVVVEDIHAAIEHIRQYGTQHSESILTSSQNLARQFINQVDAAAVYVNASTRFTDGGQFGLGAEVAVSTQKLHARGPMGLEALTSYKWVCEGEYTVRK.

This sequence belongs to the gamma-glutamyl phosphate reductase family.

It localises to the cytoplasm. It catalyses the reaction L-glutamate 5-semialdehyde + phosphate + NADP(+) = L-glutamyl 5-phosphate + NADPH + H(+). It participates in amino-acid biosynthesis; L-proline biosynthesis; L-glutamate 5-semialdehyde from L-glutamate: step 2/2. Its function is as follows. Catalyzes the NADPH-dependent reduction of L-glutamate 5-phosphate into L-glutamate 5-semialdehyde and phosphate. The product spontaneously undergoes cyclization to form 1-pyrroline-5-carboxylate. The sequence is that of Gamma-glutamyl phosphate reductase from Haemophilus influenzae (strain PittEE).